The sequence spans 92 residues: uncharacterized protein (92 aa).

Belongs to the IUNH family.

This is an uncharacterized protein from Corynebacterium ammoniagenes (Brevibacterium ammoniagenes).